The chain runs to 393 residues: PxcA-like protein (393 aa).

4 consecutive transmembrane segments (helical) span residues 173–193 (FLIVLIFIPLTVQILTKNLVF), 271–291 (IVNLLADIAGLVAFVVLIIVF), 306–326 (FLALNDITKVFIFILLTDMFV), and 354–374 (VYIFIATVPVFLDSLFKLLIF).

It belongs to the CemA family. PxcL subfamily.

It is found in the cell inner membrane. Together with PxcA, contributes to transient H(+) uptake following dark to light transition. Required for H(+) influx to activate the Calvin-Benson-Bassham cycle. May also be involved in CO(2) transport. This chain is PxcA-like protein, found in Synechocystis sp. (strain ATCC 27184 / PCC 6803 / Kazusa).